We begin with the raw amino-acid sequence, 1002 residues long: Carboxypeptidase Y (1002 aa).

An N-terminal signal peptide occupies residues Met-1–Ala-18. A propeptide spanning residues Gln-19 to Gly-521 is cleaved from the precursor. Disordered regions lie at residues Gln-51 to Glu-91, Asp-124 to Ser-436, and Ala-527 to Ser-546. Composition is skewed to basic and acidic residues over residues Pro-63–Asn-81 and Glu-127–Pro-143. A compositionally biased stretch (basic residues) spans Arg-144–His-170. The span at Pro-171–Glu-205 shows a compositional bias: basic and acidic residues. 15 repeat units span residues Met-225–Pro-237, Met-238–Pro-250, Met-251–Pro-263, Met-264–Pro-276, Met-277–Pro-289, Met-290–Pro-302, Met-303–Pro-315, Met-316–Pro-328, Met-329–Pro-341, Asp-361–Lys-369, Asp-370–Lys-378, Asp-379–Lys-387, Asp-388–Lys-396, Asp-397–Lys-405, and Asp-406–Lys-414. Positions Met-225–Pro-341 are 9 X 13 AA tandem repeats of M-H-H-E-P-G-E-H-M-P-P-P-P. A compositionally biased stretch (basic and acidic residues) spans Lys-343–Glu-431. Residues Asp-361–Lys-423 form a 7 X 9 AA tandem repeats of D-K-E-H-H-K-G-P-K region. One copy of the 2-7; approximate repeat lies at Asp-415–Lys-423. 5 disulfide bridges follow: Cys-627/Cys-880, Cys-776/Cys-789, Cys-799/Cys-822, Cys-806/Cys-815, and Cys-844/Cys-851. Asn-659 carries N-linked (GlcNAc...) asparagine glycosylation. Residue Ser-715 is part of the active site. Residue Asp-921 is part of the active site. Cys-924 contributes to the substrate binding site. His-978 is an active-site residue. Met-979 contributes to the substrate binding site.

It belongs to the peptidase S10 family. Heterodimer of two subunits of 32 kDa and 19 kDa derived from the precursor protein and linked by a disulfide bond.

The protein localises to the vacuole. The catalysed reaction is Release of a C-terminal amino acid with broad specificity.. In terms of biological role, involved in degradation of small peptides. Digests preferentially peptides containing an aliphatic or hydrophobic residue in P1' position, as well as methionine, leucine or phenylalanine in P1 position of ester substrate. The chain is Carboxypeptidase Y (cpy1) from Schizosaccharomyces pombe (strain 972 / ATCC 24843) (Fission yeast).